The sequence spans 280 residues: L-proline cis-4-hydroxylase (280 aa).

The Fe cation site is built by His-106, Asp-108, and His-154. Arg-164 is a 2-oxoglutarate binding site.

The protein belongs to the L-proline cis-4-/cis-3-hydroxylase family. Fe(2+) is required as a cofactor.

It carries out the reaction L-proline + 2-oxoglutarate + O2 = cis-4-hydroxy-L-proline + succinate + CO2. Inhibited by metal ions such as Co(2+), Zn(2+), Cu(2+) or Ni(2+). Is also inhibited by EDTA or diethylpyrocarbonate (DEPC) in vitro. Unlike the procollagen-proline cis-3- and trans-4-hydroxylases from mammals, does not necessarily require L-ascorbate for activity although it does increase the activity of the enzyme. Dioxygenase that catalyzes the 2-oxoglutarate-dependent selective hydroxylation of free L-proline to cis-4-hydroxy-L-proline (cis-4-Hyp). The protein is L-proline cis-4-hydroxylase of Mesorhizobium japonicum (strain LMG 29417 / CECT 9101 / MAFF 303099) (Mesorhizobium loti (strain MAFF 303099)).